Here is a 270-residue protein sequence, read N- to C-terminus: Formamidopyrimidine-DNA glycosylase (270 aa).

Catalysis depends on Pro2, which acts as the Schiff-base intermediate with DNA. The active-site Proton donor is Glu3. Lys58 serves as the catalytic Proton donor; for beta-elimination activity. Residues His91, Arg110, and Arg151 each coordinate DNA. Residues 236–270 (FVYGRGGQPCKVCGTALREVKLGQRASVYCPRCQR) form an FPG-type zinc finger. Residue Arg260 is the Proton donor; for delta-elimination activity of the active site.

This sequence belongs to the FPG family. Monomer. Requires Zn(2+) as cofactor.

It catalyses the reaction Hydrolysis of DNA containing ring-opened 7-methylguanine residues, releasing 2,6-diamino-4-hydroxy-5-(N-methyl)formamidopyrimidine.. It carries out the reaction 2'-deoxyribonucleotide-(2'-deoxyribose 5'-phosphate)-2'-deoxyribonucleotide-DNA = a 3'-end 2'-deoxyribonucleotide-(2,3-dehydro-2,3-deoxyribose 5'-phosphate)-DNA + a 5'-end 5'-phospho-2'-deoxyribonucleoside-DNA + H(+). Involved in base excision repair of DNA damaged by oxidation or by mutagenic agents. Acts as a DNA glycosylase that recognizes and removes damaged bases. Has a preference for oxidized purines, such as 7,8-dihydro-8-oxoguanine (8-oxoG). Has AP (apurinic/apyrimidinic) lyase activity and introduces nicks in the DNA strand. Cleaves the DNA backbone by beta-delta elimination to generate a single-strand break at the site of the removed base with both 3'- and 5'-phosphates. This is Formamidopyrimidine-DNA glycosylase from Pseudomonas putida (strain GB-1).